A 57-amino-acid polypeptide reads, in one-letter code: Potassium channel toxin alpha-KTx 26.3 (57 aa).

The signal sequence occupies residues 1–15; the sequence is MSGLSVFILIALVLS. A propeptide spanning residues 16–24 is cleaved from the precursor; the sequence is VIIDVLNNS. 3 disulfide bridges follow: Cys-30-Cys-48, Cys-34-Cys-53, and Cys-38-Cys-55.

This sequence belongs to the short scorpion toxin superfamily. Potassium channel inhibitor family. Alpha-KTx 26 subfamily. In terms of tissue distribution, expressed by the venom gland.

It localises to the secreted. Its function is as follows. Recombinant toxin that reversibly inhibits the potassium current of mKv1.3/KCNA3 channel stably expressed in COS7 cells (IC(50)=150 nM). This is Potassium channel toxin alpha-KTx 26.3 from Mesobuthus gibbosus (Mediterranean checkered scorpion).